A 380-amino-acid polypeptide reads, in one-letter code: NF-kappa-B inhibitor-like protein 1 (380 aa).

Residues 1-34 (MSNPSPQVPEEEASTSVCRPKSSMASTSRRQRRE) are disordered. ANK repeat units lie at residues 64 to 93 (GQPPPLHRACARHDAPALCLLLRLGADPAH) and 97 to 133 (HGDTALHAAARQGPDAYTDFFLPLLSRCPSAMGIKNK). Disordered regions lie at residues 131–166 (KNKDGETPGQILGWGPPWDSAEEEEDDASKEREWRQ) and 185–293 (GDAS…RGSL). A Phosphoserine modification is found at Ser150. The segment covering 237–286 (QQEEEQRLFRERARAKEEELRESRARRAQEALGDREPKPTRAGPREEHPR) has biased composition (basic and acidic residues).

In terms of assembly, interacts with CACTIN (via N-terminal domain); the interaction occurs in a pro-inflammatory-independent manner.

It localises to the nucleus. In terms of biological role, involved in the regulation of innate immune response. Acts as negative regulator of Toll-like receptor and interferon-regulatory factor (IRF) signaling pathways. Contributes to the negative regulation of transcriptional activation of NF-kappa-B target genes in response to endogenous pro-inflammatory stimuli. The sequence is that of NF-kappa-B inhibitor-like protein 1 (NFKBIL1) from Pan troglodytes (Chimpanzee).